The following is a 267-amino-acid chain: NH(3)-dependent NAD(+) synthetase (267 aa).

38–45 (GISGGVDS) serves as a coordination point for ATP. Asp44 contributes to the Mg(2+) binding site. Arg123 contributes to the deamido-NAD(+) binding site. Thr143 is a binding site for ATP. Position 148 (Glu148) interacts with Mg(2+). Deamido-NAD(+) contacts are provided by Lys156 and Asp163. 2 residues coordinate ATP: Lys172 and Ser193. 250 to 251 (HK) is a deamido-NAD(+) binding site.

This sequence belongs to the NAD synthetase family. As to quaternary structure, homodimer.

The enzyme catalyses deamido-NAD(+) + NH4(+) + ATP = AMP + diphosphate + NAD(+) + H(+). Its pathway is cofactor biosynthesis; NAD(+) biosynthesis; NAD(+) from deamido-NAD(+) (ammonia route): step 1/1. In terms of biological role, catalyzes the ATP-dependent amidation of deamido-NAD to form NAD. Uses ammonia as a nitrogen source. This chain is NH(3)-dependent NAD(+) synthetase, found in Pyrobaculum aerophilum (strain ATCC 51768 / DSM 7523 / JCM 9630 / CIP 104966 / NBRC 100827 / IM2).